The sequence spans 222 residues: Putative cobalt transport protein CbiM (222 aa).

The next 6 membrane-spanning stretches (helical) occupy residues 8–28, 43–63, 75–95, 107–127, 134–154, and 178–198; these read LPME…GYGI, PLLA…LPSV, LGAI…VLLF, TLGA…YLVF, LNIT…TYLT, and IFAI…ALLW.

It belongs to the CbiM family. Forms an energy-coupling factor (ECF) transporter complex composed of an ATP-binding protein (A component, CbiO), a transmembrane protein (T component, CbiQ) and 2 possible substrate-capture proteins (S components, CbiM and CbiN) of unknown stoichimetry.

The protein localises to the cell membrane. It participates in cofactor biosynthesis; adenosylcobalamin biosynthesis. Its function is as follows. Part of the energy-coupling factor (ECF) transporter complex CbiMNOQ involved in cobalt import. The polypeptide is Putative cobalt transport protein CbiM (Methanococcus voltae (strain ATCC BAA-1334 / A3)).